A 65-amino-acid chain; its full sequence is Prokaryotic ubiquitin-like protein UBact (65 aa).

Over residues Met-1–Met-17 the composition is skewed to polar residues. The tract at residues Met-1–Glu-65 is disordered. The segment covering Lys-35–Glu-65 has biased composition (basic and acidic residues). Glu-65 participates in a covalent cross-link: Isoglutamyl lysine isopeptide (Glu-Lys) (interchain with K-? in acceptor proteins).

It belongs to the ubiquitin-like protein UBact family.

Functionally, may function as a protein modifier covalently attached to lysine residues of substrate proteins. This may serve to target the modified proteins for degradation by proteasomes. The polypeptide is Prokaryotic ubiquitin-like protein UBact (Methylacidiphilum infernorum (isolate V4) (Methylokorus infernorum (strain V4))).